The following is a 782-amino-acid chain: MGKRDRVDRDKKKSKKRQYEEEEEDEDDAPGNESQEAVPSAAGKQVDESSTKVDEYGAKDYRQQMPLKGDHTSRPLWVAPDGHIFLEAFSPVYKYAQDFLVAIAEPVCRPTHVHEYKLTAYSLYAAVSVGLQTSDITEYLRKLSKTGVPDGIIQFIKLCTVSYGKVKLVLKHNRYFVESSHPDVIQHLLQDPVIRECRLRNAEGEATELITETFTSKSAISKTVEGSGGASTSQGVDAQAKSDIPKDLFDFYEQMDKDEEEEEETQTVSFEVKQEMIEELQKRCICLEYPLLAEYDFRNDSLNPDINIDLKPTAVLRPYQEKSLRKMFGNGRARSGVIVLPCGAGKSLVGVTAACTVRKRCLVLGNSAVSVEQWKAQFKMWSTIDDSQICRFTSDAKDKPIGCSIAISTYSMLGHTTKRSWEAERVMEWLKTQEWGLMILDEVHTIPAKMFRRVLTIVQAHCKLGLTATLVREDDKIVDLNFLIGPKLYEANWMELQNNGYIAKVQCAEVWCPMSPEFYREYVAIKTKKRILLYTMNPNKFRACQFLIKFHERRNDKIIVFADNVFALKEYAIRLNKPYIYGPTSQGERMQILQNFKHNPKINTIFISKVGDTSFDLPEANVLIQISSHGGSRRQEAQRLGRVLRAKKGMVAEEYNAFFYSLVSQDTQEMAYSTKRQRFLVDQGYSFKVITKLAGMEEEELAFSTKEEQQQLLQKVLAATDLDAEEEVVAGEFGSRSGQASRRFGTMSSLSGADDTVYMEYHSSRNKASTKHVHPLFKRFRK.

A compositionally biased stretch (basic and acidic residues) spans 1 to 11; the sequence is MGKRDRVDRDK. Residues 1-52 form a disordered region; the sequence is MGKRDRVDRDKKKSKKRQYEEEEEDEDDAPGNESQEAVPSAAGKQVDESSTK. Positions 6 to 18 match the Nuclear localization signal motif; that stretch reads RVDRDKKKSKKRQ. Acidic residues predominate over residues 20-30; it reads EEEEEDEDDAP. Serine 34 carries the post-translational modification Phosphoserine. The region spanning 328-489 is the Helicase ATP-binding domain; sequence FGNGRARSGV…LNFLIGPKLY (162 aa). An ATP-binding site is contributed by 341–348; sequence PCGAGKSL. The DEVH box signature appears at 442-445; that stretch reads EVHT. Residues 543-703 form the Helicase C-terminal domain; the sequence is ACQFLIKFHE…AGMEEEELAF (161 aa). At serine 686 the chain carries Phosphoserine. Serine 751 bears the Phosphoserine; by CK2 mark.

Belongs to the helicase family. RAD25/XPB subfamily. As to quaternary structure, component of the 7-subunit TFIIH core complex composed of XPB/ERCC3, XPD/ERCC2, GTF2H1, GTF2H2, GTF2H3, GTF2H4 and GTF2H5, which is active in NER. The core complex associates with the 3-subunit CDK-activating kinase (CAK) module composed of CCNH/cyclin H, CDK7 and MNAT1 to form the 10-subunit holoenzyme (holo-TFIIH) active in transcription. Interacts with PUF60. Interacts with ATF7IP. Interacts with KAT2A; leading to KAT2A recruitment to promoters and acetylation of histones. Part of TBP-based Pol II pre-initiation complex (PIC), in which Pol II core assembles with general transcription factors and other specific initiation factors including GTF2E1, GTF2E2, GTF2F1, GTF2F2, TCEA1, ERCC2, ERCC3, GTF2H2, GTF2H3, GTF2H4, GTF2H5, GTF2A1, GTF2A2, GTF2B and TBP; this large multi-subunit PIC complex mediates DNA unwinding and targets Pol II core to the transcription start site where the first phosphodiester bond forms. Post-translationally, phosphorylation on Ser-751 by CK2 controls the 5'-excision activity of ERCC1-XPF endonuclease; phosphorylated protein inhibits the excision activity and thus NER. Dephosphorylation reactivates the 5'-excision step. Phosphorylation has no effect on transcription or the 3'-5' helicase activity.

It is found in the nucleus. It catalyses the reaction Couples ATP hydrolysis with the unwinding of duplex DNA by translocating in the 3'-5' direction.. The catalysed reaction is ATP + H2O = ADP + phosphate + H(+). Phosphorylation on Ser-751 by CK2 controls the 5'-excision activity of ERCC1-XPF endonuclease; phosphorylated protein inhibits the excision activity and thus NER. ATPase activity is stimulated by TFIIH subunit p52 (GTF2H4). DNA translocase activity by this subunit in TFIIH is stimulated by XPA, ERCC5/XPG and XFP plus ERCC1. ATP-dependent 3'-5' DNA helicase/translocase; binds dsDNA rather than ssDNA, unzipping it in a translocase rather than classical helicase activity. Component of the general transcription and DNA repair factor IIH (TFIIH) core complex. When complexed to CDK-activating kinase (CAK), involved in RNA transcription by RNA polymerase II. The ATPase activity of XPB/ERCC3, but not its helicase activity, is required for DNA opening; it may wrap around the damaged DNA wedging it open, causing localized melting and twisting that allows XPD/ERCC2 helicase to anchor. The ATP-dependent helicase activity of XPB/ERCC3 may be required for promoter escape. Also involved in transcription-coupled nucleotide excision repair (NER) of damaged DNA. In NER, TFIIH acts by opening DNA around the lesion to allow the excision of the damaged oligonucleotide and its replacement by a new DNA fragment. The structure of the TFIIH transcription complex differs from the NER-TFIIH complex; large movements by XPD/ERCC2 and XPB/ERCC3 are stabilized by XPA. The protein is General transcription and DNA repair factor IIH helicase/translocase subunit XPB (Ercc3) of Rattus norvegicus (Rat).